Here is a 459-residue protein sequence, read N- to C-terminus: ATP-dependent protease ATPase subunit HslU (459 aa).

ATP-binding positions include Val-18, Gly-60–Glu-65, Asp-272, Glu-337, and Arg-409.

It belongs to the ClpX chaperone family. HslU subfamily. In terms of assembly, a double ring-shaped homohexamer of HslV is capped on each side by a ring-shaped HslU homohexamer. The assembly of the HslU/HslV complex is dependent on binding of ATP.

It is found in the cytoplasm. Its function is as follows. ATPase subunit of a proteasome-like degradation complex; this subunit has chaperone activity. The binding of ATP and its subsequent hydrolysis by HslU are essential for unfolding of protein substrates subsequently hydrolyzed by HslV. HslU recognizes the N-terminal part of its protein substrates and unfolds these before they are guided to HslV for hydrolysis. This is ATP-dependent protease ATPase subunit HslU from Thermoanaerobacter pseudethanolicus (strain ATCC 33223 / 39E) (Clostridium thermohydrosulfuricum).